The sequence spans 333 residues: Ig gamma-2B chain C region (333 aa).

3 consecutive Ig-like domains span residues 6 to 96 (PSVY…KKVE), 124 to 223 (PSVF…KTIS), and 232 to 328 (PQVY…KSIS). 3 disulfide bridges follow: cysteine 27-cysteine 80, cysteine 147-cysteine 207, and cysteine 253-cysteine 311.

In Rattus norvegicus (Rat), this protein is Ig gamma-2B chain C region (Igh-1a).